The primary structure comprises 223 residues: Deoxyribose-phosphate aldolase (223 aa).

The Proton donor/acceptor role is filled by aspartate 92. The active-site Schiff-base intermediate with acetaldehyde is lysine 158. The active-site Proton donor/acceptor is lysine 188.

This sequence belongs to the DeoC/FbaB aldolase family. DeoC type 1 subfamily.

It is found in the cytoplasm. It carries out the reaction 2-deoxy-D-ribose 5-phosphate = D-glyceraldehyde 3-phosphate + acetaldehyde. The protein operates within carbohydrate degradation; 2-deoxy-D-ribose 1-phosphate degradation; D-glyceraldehyde 3-phosphate and acetaldehyde from 2-deoxy-alpha-D-ribose 1-phosphate: step 2/2. Catalyzes a reversible aldol reaction between acetaldehyde and D-glyceraldehyde 3-phosphate to generate 2-deoxy-D-ribose 5-phosphate. The protein is Deoxyribose-phosphate aldolase of Mycolicibacterium paratuberculosis (strain ATCC BAA-968 / K-10) (Mycobacterium paratuberculosis).